Reading from the N-terminus, the 238-residue chain is Ankyrin repeat domain-containing protein 49 (238 aa).

Residue Ser48 is modified to Phosphoserine. 4 ANK repeats span residues 77-105, 106-135, 139-168, and 172-205; these read LLWA…TRDE, DKYT…DVHA, DGWT…DVNA, and GLLT…GLKN.

It is found in the nucleus. In terms of biological role, may have a role in spermatogenesis where it promotes autophagy in response to serum starvation, via the NF-kappaB pathway. The chain is Ankyrin repeat domain-containing protein 49 (ANKRD49) from Bos taurus (Bovine).